The following is a 188-amino-acid chain: MTIKSDKWIRRMAEQTGMIEPFEPGQVRQSNGQKIVSYGTSSYGYDIRCADEFKIFTNINSTIVDPKNFDENSFVDIKSDVCIIPPNSFALARTIEYFRIPRNVLTICLGKSTYARCGIIVNVTPFEPEWEGYVTLEFSNTTPLPAKIYAGEGCAQVLFFESDEVCETSYKDRGGKYQGQHGVTLPKT.

Residues 111–116 (KSTYAR), 135–137 (TLE), glutamine 156, tyrosine 170, and glutamine 180 contribute to the dCTP site. Glutamate 137 (proton donor/acceptor) is an active-site residue.

Belongs to the dCTP deaminase family. Homotrimer.

The catalysed reaction is dCTP + H2O + H(+) = dUTP + NH4(+). Its pathway is pyrimidine metabolism; dUMP biosynthesis; dUMP from dCTP (dUTP route): step 1/2. Functionally, catalyzes the deamination of dCTP to dUTP. The sequence is that of dCTP deaminase from Janthinobacterium sp. (strain Marseille) (Minibacterium massiliensis).